A 1021-amino-acid chain; its full sequence is Multidrug resistance protein MdtC (1021 aa).

Residues 1 to 6 (MKFFAL) lie on the Cytoplasmic side of the membrane. The chain crosses the membrane as a helical span at residues 7 to 29 (FIYRPVATILLSVAITLCGILGF). Residues 30-335 (RMLPVAPLPQ…TIRASLEEVE (306 aa)) lie on the Periplasmic side of the membrane. The helical transmembrane segment at 336-353 (QTLIISVALVILVVFLFL) threads the bilayer. Residues 354-359 (RSGRAT) lie on the Cytoplasmic side of the membrane. A helical transmembrane segment spans residues 360–379 (IIPAVAVPVSLIGTFAAMYL). Topologically, residues 380–388 (CGFSLNNLS) are periplasmic. A helical transmembrane segment spans residues 389 to 411 (LMALTIATGFVVDDAIVVLENIA). Over 412–430 (RHLEAGMKPLQAALQGTRE) the chain is Cytoplasmic. A helical membrane pass occupies residues 431–453 (VGFTVLSMSLSLVAVFLPLLLMG). The Periplasmic portion of the chain corresponds to 454–467 (GLPGRLLREFAVTL). The helical transmembrane segment at 468–490 (SVAIGISLLVSLTLTPMMCGWML) threads the bilayer. Over 491 to 848 (KASKPREQKR…QVFQETMNSQ (358 aa)) the chain is Cytoplasmic. Residues 849–871 (VILIIAAIATVYIVLGILYESYV) traverse the membrane as a helical segment. Over 872 to 890 (HPLTILSTLPSAGVGALLA) the chain is Periplasmic. A helical transmembrane segment spans residues 891 to 913 (LELFNAPFSLIALIGIMLLIGIV). Residues 914–943 (KKNAIMMVDFALEAQRHGNLTPQEAIFQAC) lie on the Cytoplasmic side of the membrane. A helical membrane pass occupies residues 944–966 (LLRFRPIMMTTLAALFGALPLVL). Over 967–980 (SGGDGSELRQPLEI) the chain is Periplasmic. A helical membrane pass occupies residues 981-1003 (TIVGGLVMSQLLTLYTTPVVYLF). The Cytoplasmic portion of the chain corresponds to 1004-1021 (FDRLRLRFSRKPKQTVTE).

It belongs to the resistance-nodulation-cell division (RND) (TC 2.A.6) family. MdtC subfamily. As to quaternary structure, part of a tripartite efflux system composed of MdtA, MdtB and MdtC. MdtC forms a heteromultimer with MdtB.

It localises to the cell inner membrane. The sequence is that of Multidrug resistance protein MdtC from Shigella flexneri.